The primary structure comprises 126 residues: Large ribosomal subunit protein bL12 (126 aa).

Belongs to the bacterial ribosomal protein bL12 family. As to quaternary structure, homodimer. Part of the ribosomal stalk of the 50S ribosomal subunit. Forms a multimeric L10(L12)X complex, where L10 forms an elongated spine to which 2 to 4 L12 dimers bind in a sequential fashion. Binds GTP-bound translation factors.

Functionally, forms part of the ribosomal stalk which helps the ribosome interact with GTP-bound translation factors. Is thus essential for accurate translation. This Corynebacterium diphtheriae (strain ATCC 700971 / NCTC 13129 / Biotype gravis) protein is Large ribosomal subunit protein bL12.